Consider the following 306-residue polypeptide: Proteasome subunit beta (306 aa).

Positions 1 to 67 (MTWPNRDQPA…GLPTDAVPHG (67 aa)) are cleaved as a propeptide — removed in mature form; by autocatalysis. The Nucleophile role is filled by Thr-68.

The protein belongs to the peptidase T1B family. In terms of assembly, the 20S proteasome core is composed of 14 alpha and 14 beta subunits that assemble into four stacked heptameric rings, resulting in a barrel-shaped structure. The two inner rings, each composed of seven catalytic beta subunits, are sandwiched by two outer rings, each composed of seven alpha subunits. The catalytic chamber with the active sites is on the inside of the barrel. Has a gated structure, the ends of the cylinder being occluded by the N-termini of the alpha-subunits. Is capped by the proteasome-associated ATPase, ARC.

Its subcellular location is the cytoplasm. It catalyses the reaction Cleavage of peptide bonds with very broad specificity.. It participates in protein degradation; proteasomal Pup-dependent pathway. Its activity is regulated as follows. The formation of the proteasomal ATPase ARC-20S proteasome complex, likely via the docking of the C-termini of ARC into the intersubunit pockets in the alpha-rings, may trigger opening of the gate for substrate entry. Interconversion between the open-gate and close-gate conformations leads to a dynamic regulation of the 20S proteasome proteolysis activity. Its function is as follows. Component of the proteasome core, a large protease complex with broad specificity involved in protein degradation. The sequence is that of Proteasome subunit beta from Mycolicibacterium vanbaalenii (strain DSM 7251 / JCM 13017 / BCRC 16820 / KCTC 9966 / NRRL B-24157 / PYR-1) (Mycobacterium vanbaalenii).